The sequence spans 75 residues: ATP synthase subunit c (75 aa).

2 consecutive transmembrane segments (helical) span residues 8–28 (FIAIGLSVLGILGAGLGVANI) and 54–74 (AGMVEFTGLLAFVLAMLLMFV).

This sequence belongs to the ATPase C chain family. As to quaternary structure, F-type ATPases have 2 components, F(1) - the catalytic core - and F(0) - the membrane proton channel. F(1) has five subunits: alpha(3), beta(3), gamma(1), delta(1), epsilon(1). F(0) has three main subunits: a(1), b(2) and c(10-14). The alpha and beta chains form an alternating ring which encloses part of the gamma chain. F(1) is attached to F(0) by a central stalk formed by the gamma and epsilon chains, while a peripheral stalk is formed by the delta and b chains.

It is found in the cell membrane. F(1)F(0) ATP synthase produces ATP from ADP in the presence of a proton or sodium gradient. F-type ATPases consist of two structural domains, F(1) containing the extramembraneous catalytic core and F(0) containing the membrane proton channel, linked together by a central stalk and a peripheral stalk. During catalysis, ATP synthesis in the catalytic domain of F(1) is coupled via a rotary mechanism of the central stalk subunits to proton translocation. In terms of biological role, key component of the F(0) channel; it plays a direct role in translocation across the membrane. A homomeric c-ring of between 10-14 subunits forms the central stalk rotor element with the F(1) delta and epsilon subunits. The polypeptide is ATP synthase subunit c (Wolbachia sp. subsp. Brugia malayi (strain TRS)).